The following is a 429-amino-acid chain: Arsenical pump membrane protein (429 aa).

Transmembrane regions (helical) follow at residues 24–44, 46–66, 98–118, 121–141, 178–198, 228–248, 249–269, 274–294, 316–335, and 407–427; these read IGWS…IHIA, IPVV…VIII, IVLL…ALIL, IVIA…AFVM, VMVP…HLFF, WVVL…GIPV, SAIA…GHGI, VLRG…LVIY, GLWA…SSIM, and IVMT…RLSV.

It localises to the cell inner membrane. Its function is as follows. Involved in arsenical resistance. Thought to form the channel of an arsenite pump. The protein is Arsenical pump membrane protein (arsB) of Escherichia coli.